We begin with the raw amino-acid sequence, 234 residues long: Heme-copper oxidase subunit 2 (234 aa).

Helical transmembrane passes span 13–33 (LFLL…AFFI) and 72–92 (LLFV…DETL). Cu cation contacts are provided by H151, C188, C192, and H196.

Belongs to the cytochrome c oxidase subunit 2 family.

It is found in the cell membrane. This is Heme-copper oxidase subunit 2 (aoxA) from Aeropyrum pernix (strain ATCC 700893 / DSM 11879 / JCM 9820 / NBRC 100138 / K1).